The primary structure comprises 160 residues: Cytochrome b6-f complex subunit 4 (160 aa).

3 helical membrane passes run 36–56 (LLYI…GLAV), 95–115 (LLGI…PFIE), and 131–151 (VVFL…CLPI).

It belongs to the cytochrome b family. PetD subfamily. The 4 large subunits of the cytochrome b6-f complex are cytochrome b6, subunit IV (17 kDa polypeptide, PetD), cytochrome f and the Rieske protein, while the 4 small subunits are PetG, PetL, PetM and PetN. The complex functions as a dimer.

The protein resides in the cellular thylakoid membrane. In terms of biological role, component of the cytochrome b6-f complex, which mediates electron transfer between photosystem II (PSII) and photosystem I (PSI), cyclic electron flow around PSI, and state transitions. This chain is Cytochrome b6-f complex subunit 4, found in Prochlorococcus marinus (strain MIT 9515).